The sequence spans 220 residues: StAR-related lipid transfer protein 6 (220 aa).

Residues 1-208 (MDFKAIAQQT…AKDGIKAHRT (208 aa)) form the START domain.

Functionally, may be involved in the intracellular transport of sterols or other lipids. May bind cholesterol or other sterols. This Homo sapiens (Human) protein is StAR-related lipid transfer protein 6 (STARD6).